A 277-amino-acid chain; its full sequence is NADPH-dependent 7-cyano-7-deazaguanine reductase (277 aa).

83 to 85 is a substrate binding site; the sequence is VES. 85-86 contributes to the NADPH binding site; it reads SK. Cys-184 serves as the catalytic Thioimide intermediate. The active-site Proton donor is the Asp-191. Residue 223–224 coordinates substrate; that stretch reads HE. 252–253 lines the NADPH pocket; sequence RG.

This sequence belongs to the GTP cyclohydrolase I family. QueF type 2 subfamily. Homodimer.

The protein localises to the cytoplasm. The catalysed reaction is 7-aminomethyl-7-carbaguanine + 2 NADP(+) = 7-cyano-7-deazaguanine + 2 NADPH + 3 H(+). It functions in the pathway tRNA modification; tRNA-queuosine biosynthesis. Functionally, catalyzes the NADPH-dependent reduction of 7-cyano-7-deazaguanine (preQ0) to 7-aminomethyl-7-deazaguanine (preQ1). The polypeptide is NADPH-dependent 7-cyano-7-deazaguanine reductase (Cupriavidus metallidurans (strain ATCC 43123 / DSM 2839 / NBRC 102507 / CH34) (Ralstonia metallidurans)).